The chain runs to 393 residues: Formate-dependent phosphoribosylglycinamide formyltransferase (393 aa).

Residues 22-23 and E82 each bind N(1)-(5-phospho-beta-D-ribosyl)glycinamide; that span reads EL. ATP-binding positions include R114, K155, 160–165, 195–198, and E203; these read SSGKGQ and EGFI. Residues 119–308 enclose the ATP-grasp domain; sequence RLAAEELGLP…EFALHARAIL (190 aa). Mg(2+)-binding residues include E267 and E279. Residues D286, K356, and 363 to 364 each bind N(1)-(5-phospho-beta-D-ribosyl)glycinamide; that span reads RR.

It belongs to the PurK/PurT family. As to quaternary structure, homodimer.

It carries out the reaction N(1)-(5-phospho-beta-D-ribosyl)glycinamide + formate + ATP = N(2)-formyl-N(1)-(5-phospho-beta-D-ribosyl)glycinamide + ADP + phosphate + H(+). It participates in purine metabolism; IMP biosynthesis via de novo pathway; N(2)-formyl-N(1)-(5-phospho-D-ribosyl)glycinamide from N(1)-(5-phospho-D-ribosyl)glycinamide (formate route): step 1/1. Its function is as follows. Involved in the de novo purine biosynthesis. Catalyzes the transfer of formate to 5-phospho-ribosyl-glycinamide (GAR), producing 5-phospho-ribosyl-N-formylglycinamide (FGAR). Formate is provided by PurU via hydrolysis of 10-formyl-tetrahydrofolate. The protein is Formate-dependent phosphoribosylglycinamide formyltransferase of Stutzerimonas stutzeri (strain A1501) (Pseudomonas stutzeri).